Here is a 185-residue protein sequence, read N- to C-terminus: dCTP deaminase (185 aa).

DCTP is bound by residues 107–112 (KSTYAR), 131–133 (TLE), Gln-152, Tyr-166, and Gln-176. Glu-133 functions as the Proton donor/acceptor in the catalytic mechanism.

Belongs to the dCTP deaminase family. In terms of assembly, homotrimer.

It carries out the reaction dCTP + H2O + H(+) = dUTP + NH4(+). The protein operates within pyrimidine metabolism; dUMP biosynthesis; dUMP from dCTP (dUTP route): step 1/2. In terms of biological role, catalyzes the deamination of dCTP to dUTP. The polypeptide is dCTP deaminase (Wolbachia sp. subsp. Brugia malayi (strain TRS)).